Reading from the N-terminus, the 388-residue chain is Single-stranded DNA-binding protein 3 (388 aa).

Position 1 is an N-acetylmethionine (Met-1). A LisH domain is found at 16–48 (AREKLALYVYEYLLHVGAQKSAQTFLSEIRWEK). Positions 101–388 (VLGNIPPNDG…NYSPSMTMSV (288 aa)) are disordered. A compositionally biased stretch (pro residues) spans 126–139 (GSQPSPHAQPPPHN). Residues Arg-155, Arg-161, and Arg-165 each carry the asymmetric dimethylarginine modification. Low complexity-rich tracts occupy residues 200–209 (MQRMNPPRGM) and 250–268 (PNSANSIPYSSSSPGTYVG). A compositionally biased stretch (pro residues) spans 272–282 (GGGPPGTPIMP). Positions 285–296 (ADSTNSSDNIYT) are enriched in polar residues. The segment covering 315–325 (GSDGPMGGMGG) has biased composition (gly residues). The span at 346–357 (NSPNNISGISNP) shows a compositional bias: low complexity. Residues Ser-347, Ser-352, and Ser-355 each carry the phosphoserine modification. At Thr-360 the chain carries Phosphothreonine. The segment covering 373–388 (HSFQNDNYSPSMTMSV) has biased composition (polar residues). A phosphoserine mark is found at Ser-381 and Ser-387.

In terms of tissue distribution, highly expressed in all hematopoietic tissues, including spleen, lymph node, peripheral blood, bone marrow, thymus, and fetal liver, with highest expression in thymus and fetal liver. Expression is also high in heart, brain, kidney, and skeletal muscle.

It is found in the nucleus. In terms of biological role, may be involved in transcription regulation of the alpha 2(I) collagen gene where it binds to the single-stranded polypyrimidine sequences in the promoter region. The sequence is that of Single-stranded DNA-binding protein 3 (SSBP3) from Homo sapiens (Human).